The chain runs to 432 residues: Adenylosuccinate synthetase (432 aa).

Residues 13 to 19 (GDEGKGK) and 41 to 43 (GHT) contribute to the GTP site. Aspartate 14 (proton acceptor) is an active-site residue. Aspartate 14 and glycine 41 together coordinate Mg(2+). Residues 14–17 (DEGK), 39–42 (NAGH), threonine 130, arginine 144, glutamine 225, threonine 240, and arginine 304 each bind IMP. Histidine 42 serves as the catalytic Proton donor. 300-306 (AVTGRPR) contributes to the substrate binding site. Residues arginine 306, 332–334 (KLD), and 415–417 (STG) contribute to the GTP site.

Belongs to the adenylosuccinate synthetase family. In terms of assembly, homodimer. The cofactor is Mg(2+).

The protein localises to the cytoplasm. It carries out the reaction IMP + L-aspartate + GTP = N(6)-(1,2-dicarboxyethyl)-AMP + GDP + phosphate + 2 H(+). The protein operates within purine metabolism; AMP biosynthesis via de novo pathway; AMP from IMP: step 1/2. In terms of biological role, plays an important role in the de novo pathway of purine nucleotide biosynthesis. Catalyzes the first committed step in the biosynthesis of AMP from IMP. The protein is Adenylosuccinate synthetase of Haemophilus influenzae (strain PittEE).